Here is a 238-residue protein sequence, read N- to C-terminus: MNESQFIEALRAEGFELSETQLSQFKRYFEMLVEWNEKMNLTAITDREEVYLKHFYDSLSAAFHFDFTKVETVCDVGAGAGFPSLPLKILFPHLHVTIIDSLNKRITFLNELALALGLEGVAFHHGRAEEFGKNKKFREQFDVVTARAVARMTVLAEYCLPLAKVGGSFVALKAAKVSDEMADAKNALAVLGGKEKATHQFLLPGEMSERNIVVVDKLRKTPGKYPRKAGTPAKEPLI.

S-adenosyl-L-methionine-binding positions include glycine 77, phenylalanine 82, 128–129, and arginine 147; that span reads AE.

This sequence belongs to the methyltransferase superfamily. RNA methyltransferase RsmG family.

It is found in the cytoplasm. Functionally, specifically methylates the N7 position of guanine in position 535 of 16S rRNA. The chain is Ribosomal RNA small subunit methyltransferase G from Exiguobacterium sp. (strain ATCC BAA-1283 / AT1b).